We begin with the raw amino-acid sequence, 543 residues long: Probable protein kinase UbiB (543 aa).

Positions 123 to 501 (DFDIVPLASA…KRQQAKGQFL (379 aa)) constitute a Protein kinase domain. ATP-binding positions include 129–137 (LASASIAQV) and Lys-152. Asp-287 acts as the Proton acceptor in catalysis. The helical transmembrane segment at 517–539 (TSNITALASISAATGVTFWLLSW) threads the bilayer.

This sequence belongs to the ABC1 family. UbiB subfamily.

It localises to the cell inner membrane. Its pathway is cofactor biosynthesis; ubiquinone biosynthesis [regulation]. Is probably a protein kinase regulator of UbiI activity which is involved in aerobic coenzyme Q (ubiquinone) biosynthesis. The protein is Probable protein kinase UbiB of Aliivibrio salmonicida (strain LFI1238) (Vibrio salmonicida (strain LFI1238)).